The sequence spans 254 residues: Cytokine-inducible SH2-containing protein (254 aa).

Residues 82–188 (WYWGSITASE…ATTPALPTPK (107 aa)) enclose the SH2 domain. Residues 171 to 195 (TRSDSPDLATTPALPTPKEDAPGDP) form a disordered region. Residues 205-253 (KLVQPFVRRSSTRSLQHLCRLVINRLVVDVDCLPLPRRMADYLRQYPFQ) form the SOCS box domain.

In terms of assembly, stably associated with the tyrosine-phosphorylated IL3 receptor beta chain and tyrosine-phosphorylated EPO receptor (EPOR).

The protein operates within protein modification; protein ubiquitination. SOCS family proteins form part of a classical negative feedback system that regulates cytokine signal transduction. CIS is involved in the negative regulation of cytokines that signal through the JAK-STAT5 pathway such as erythropoietin, prolactin and interleukin 3 (IL3) receptor. Inhibits STAT5 trans-activation by suppressing its tyrosine phosphorylation. May be a substrate recognition component of a SCF-like ECS (Elongin BC-CUL2/5-SOCS-box protein) E3 ubiquitin-protein ligase complex which mediates the ubiquitination and subsequent proteasomal degradation of target proteins. In Bos taurus (Bovine), this protein is Cytokine-inducible SH2-containing protein (CISH).